The primary structure comprises 166 residues: Endoribonuclease YbeY (166 aa).

Zn(2+) contacts are provided by His-132, His-136, and His-142.

Belongs to the endoribonuclease YbeY family. Requires Zn(2+) as cofactor.

The protein resides in the cytoplasm. Single strand-specific metallo-endoribonuclease involved in late-stage 70S ribosome quality control and in maturation of the 3' terminus of the 16S rRNA. The polypeptide is Endoribonuclease YbeY (Clostridium botulinum (strain Langeland / NCTC 10281 / Type F)).